The primary structure comprises 248 residues: Probable aquaporin TIP2-2 (248 aa).

Transmembrane regions (helical) follow at residues 21–41 and 55–75; these read AYVA…GSAI and AGLV…VAIG. The short motif at 84-86 is the NPA 1 element; the sequence is NPA. Helical transmembrane passes span 87-109, 133-153, and 168-188; these read VTFG…WIAQ, LSGV…FGLV, and LGTI…LVAG. The short motif at 196–198 is the NPA 2 element; sequence NPA. Residues 210–230 traverse the membrane as a helical segment; the sequence is YTNIWIYWVGPLVGGGLAGLV.

The protein belongs to the MIP/aquaporin (TC 1.A.8) family. TIP (TC 1.A.8.10) subfamily. Expressed in roots and leaves.

It localises to the vacuole membrane. Functionally, aquaporins facilitate the transport of water and small neutral solutes across cell membranes. May be involved in transport from the vacuolar compartment to the cytoplasm. This Oryza sativa subsp. japonica (Rice) protein is Probable aquaporin TIP2-2 (TIP2-2).